A 236-amino-acid chain; its full sequence is uncharacterized protein (236 aa).

Belongs to the HyuE racemase family.

It is found in the cytoplasm. This is an uncharacterized protein from Schizosaccharomyces pombe (strain 972 / ATCC 24843) (Fission yeast).